A 767-amino-acid chain; its full sequence is MTTSPSEKTSFNIDTVANAATTPETELPWAELGLKDNEFARINEILGRRPTAAELAMYSVMWSEHCSYKSSKVHLSQFGEKVTEEMKKHLLVGIGENAGVVDIGDGWAVTFKVESHNHPSFVEPYQGAATGIGGIVRDIISMGARPVAVMDPLRFGAIDHPDTARLVHGIVSGIGGYGNSLGLPNIGGEVVFDSVYQGNPLVNALAVGVLRHEDIRLANASGVGNRVVLFGARTGGDGIGGASVLASESFDSTKPSKRPAVQVGDPFAEKVLIECCLELFKASIVDGIQDLGAAGISCATSELASNGEGGMHVELTSVLLRDPTLTPGEILMSESQERMMAVVTPENVAAFEAVMAKWDVEYSWLGEVTDTGRLIIDWDGETIVDVDPRTVAHDGPVYNRPFHRPEWLDALQADSFLASGVAEVPADLGAAVVELMSSPNMASKSWVTDQYDRYVQGNTAQAMPDDAGVIRVDETTGLGVALSTDANGRYCYLNPREGAKLALAEAYRNVATSGARPLAVTDCLNFGSPEDPEVMWQFAESVTGLADACQELGVPVTGGNVSLYNQTGGVAIHPTPVVGVLGVFDDVARSTPSGWRVDGQAIYLLGTTRAELDGSEWANLRGHLGGQPPVVDLGREKELAEILINASRDGMVDAAHDLSEGGLAAALVESSLRFGVGARIGLDELAVRDGISIFEALFSESQARALVSVPRSEEVRFNDMCTARGFEHLRLGVVDAESGALDVQGAFTLSLDELREAHEATLPKYFG.

Residue His-65 is part of the active site. ATP is bound by residues Tyr-68 and Lys-112. Glu-114 lines the Mg(2+) pocket. Substrate is bound by residues 115–118 (SHNH) and Arg-137. The Proton acceptor role is filled by His-116. Residue Asp-138 participates in Mg(2+) binding. Gln-262 contacts substrate. Asp-290 serves as a coordination point for Mg(2+). 334–336 (ESQ) is a substrate binding site. ATP-binding residues include Asp-522 and Gly-559. Asn-560 contacts Mg(2+). Ser-562 provides a ligand contact to substrate.

This sequence belongs to the FGAMS family. In terms of assembly, monomer. Part of the FGAM synthase complex composed of 1 PurL, 1 PurQ and 2 PurS subunits.

The protein resides in the cytoplasm. The enzyme catalyses N(2)-formyl-N(1)-(5-phospho-beta-D-ribosyl)glycinamide + L-glutamine + ATP + H2O = 2-formamido-N(1)-(5-O-phospho-beta-D-ribosyl)acetamidine + L-glutamate + ADP + phosphate + H(+). Its pathway is purine metabolism; IMP biosynthesis via de novo pathway; 5-amino-1-(5-phospho-D-ribosyl)imidazole from N(2)-formyl-N(1)-(5-phospho-D-ribosyl)glycinamide: step 1/2. Its function is as follows. Part of the phosphoribosylformylglycinamidine synthase complex involved in the purines biosynthetic pathway. Catalyzes the ATP-dependent conversion of formylglycinamide ribonucleotide (FGAR) and glutamine to yield formylglycinamidine ribonucleotide (FGAM) and glutamate. The FGAM synthase complex is composed of three subunits. PurQ produces an ammonia molecule by converting glutamine to glutamate. PurL transfers the ammonia molecule to FGAR to form FGAM in an ATP-dependent manner. PurS interacts with PurQ and PurL and is thought to assist in the transfer of the ammonia molecule from PurQ to PurL. The sequence is that of Phosphoribosylformylglycinamidine synthase subunit PurL from Renibacterium salmoninarum (strain ATCC 33209 / DSM 20767 / JCM 11484 / NBRC 15589 / NCIMB 2235).